Here is a 290-residue protein sequence, read N- to C-terminus: 33 kDa chaperonin (290 aa).

Cystine bridges form between Cys235–Cys237 and Cys268–Cys271.

It belongs to the HSP33 family. In terms of processing, under oxidizing conditions two disulfide bonds are formed involving the reactive cysteines. Under reducing conditions zinc is bound to the reactive cysteines and the protein is inactive.

Its subcellular location is the cytoplasm. Its function is as follows. Redox regulated molecular chaperone. Protects both thermally unfolding and oxidatively damaged proteins from irreversible aggregation. Plays an important role in the bacterial defense system toward oxidative stress. This chain is 33 kDa chaperonin, found in Streptococcus pyogenes serotype M5 (strain Manfredo).